The chain runs to 141 residues: Putative pre-16S rRNA nuclease (141 aa).

This sequence belongs to the YqgF nuclease family.

The protein resides in the cytoplasm. Functionally, could be a nuclease involved in processing of the 5'-end of pre-16S rRNA. The sequence is that of Putative pre-16S rRNA nuclease from Aliivibrio fischeri (strain ATCC 700601 / ES114) (Vibrio fischeri).